Consider the following 149-residue polypeptide: UPF0179 protein TON_1048 (149 aa).

The protein belongs to the UPF0179 family.

This is UPF0179 protein TON_1048 from Thermococcus onnurineus (strain NA1).